The chain runs to 295 residues: Hydroxylase/desaturase efuI (295 aa).

Belongs to the asaB hydroxylase/desaturase family.

It functions in the pathway secondary metabolite biosynthesis; terpenoid biosynthesis. Functionally, hydroxylase/desaturase; part of the gene cluster that mediates the biosynthesis of enfumafungin, a glycosylated fernene-type triterpenoid with potent antifungal activity, mediated by its interaction with beta-1,3-glucan synthase and the fungal cell wall. The pathway begins with the terpene cyclase-glycosyl transferase fusion protein that most likely uses 2,3-oxidosqualene as substrate and catalyzes glycosylation immediately after cyclization. The fernene glycoside then could be processed by the desaturase efuI which catalyzes isomerization of a double bond established by efuA to form the core structure. The latter would then undergo a series of hydroxylations in unknown order at C-2, C-19, C-23 and C-25, which would be catalyzed by two of the three cytochrome P450 monooxygenases efuB, efuG or efuH. The hydroxy-group at C-25 becomes oxidized by the dehydrogenase efuE to enable a spontaneous, non-enzymatic hemiacetal formation with C-23. After hydroxylation at C-2, acetylation by the acetyltransferase efuC takes place. The final steps in enfumafungin biosynthesis require expansion of the 5-membered ring by lactonization via a Baeyer-Villiger reaction mediated by one of the BGC's cytochrome P450 monooxygenases (efuB, efuG or efuH) followed by ring cleavage. This type of reaction would establish a double bond between C-20 and C-21 which could be reduced by the reductase efuL to form the final product. This chain is Hydroxylase/desaturase efuI, found in Hormonema carpetanum.